The primary structure comprises 438 residues: tRNA-2-methylthio-N(6)-dimethylallyladenosine synthase (438 aa).

The MTTase N-terminal domain maps to 4–120 (KKLYIDTVGC…VPEMVKDAEA (117 aa)). Cys13, Cys49, Cys83, Cys158, Cys162, and Cys165 together coordinate [4Fe-4S] cluster. Residues 144 to 377 (GRKRVSAFVT…QAVHSRIHNE (234 aa)) enclose the Radical SAM core domain. The TRAM domain maps to 377-438 (ETYVGSTQQV…YANSLLGELL (62 aa)).

This sequence belongs to the methylthiotransferase family. MiaB subfamily. Monomer. [4Fe-4S] cluster serves as cofactor.

Its subcellular location is the cytoplasm. The enzyme catalyses N(6)-dimethylallyladenosine(37) in tRNA + (sulfur carrier)-SH + AH2 + 2 S-adenosyl-L-methionine = 2-methylsulfanyl-N(6)-dimethylallyladenosine(37) in tRNA + (sulfur carrier)-H + 5'-deoxyadenosine + L-methionine + A + S-adenosyl-L-homocysteine + 2 H(+). Functionally, catalyzes the methylthiolation of N6-(dimethylallyl)adenosine (i(6)A), leading to the formation of 2-methylthio-N6-(dimethylallyl)adenosine (ms(2)i(6)A) at position 37 in tRNAs that read codons beginning with uridine. The chain is tRNA-2-methylthio-N(6)-dimethylallyladenosine synthase from Trichlorobacter lovleyi (strain ATCC BAA-1151 / DSM 17278 / SZ) (Geobacter lovleyi).